We begin with the raw amino-acid sequence, 316 residues long: Beta-ketoacyl-[acyl-carrier-protein] synthase III 4 (316 aa).

Residues Cys-114 and His-242 contribute to the active site. Residues 243-247 (QANLR) are ACP-binding. Residue Asn-272 is part of the active site.

This sequence belongs to the thiolase-like superfamily. FabH family. As to quaternary structure, homodimer.

It is found in the cytoplasm. The enzyme catalyses malonyl-[ACP] + acetyl-CoA + H(+) = 3-oxobutanoyl-[ACP] + CO2 + CoA. Its pathway is lipid metabolism; fatty acid biosynthesis. Catalyzes the condensation reaction of fatty acid synthesis by the addition to an acyl acceptor of two carbons from malonyl-ACP. Catalyzes the first condensation reaction which initiates fatty acid synthesis and may therefore play a role in governing the total rate of fatty acid production. Possesses both acetoacetyl-ACP synthase and acetyl transacylase activities. Its substrate specificity determines the biosynthesis of branched-chain and/or straight-chain of fatty acids. This chain is Beta-ketoacyl-[acyl-carrier-protein] synthase III 4, found in Streptomyces coelicolor (strain ATCC BAA-471 / A3(2) / M145).